We begin with the raw amino-acid sequence, 309 residues long: HPr kinase/phosphorylase (309 aa).

Active-site residues include H138 and K159. Position 153-160 (153-160 (GQSGVGKS)) interacts with ATP. Mg(2+) is bound at residue S160. The Proton acceptor; for phosphorylation activity. Proton donor; for dephosphorylation activity role is filled by D177. The segment at 201–210 (LEIRGLGIIN) is important for the catalytic mechanism of both phosphorylation and dephosphorylation. Residue E202 participates in Mg(2+) binding. Residue R243 is part of the active site. An important for the catalytic mechanism of dephosphorylation region spans residues 264 to 269 (PVRPGR).

The protein belongs to the HPrK/P family. Homohexamer. Requires Mg(2+) as cofactor.

The catalysed reaction is [HPr protein]-L-serine + ATP = [HPr protein]-O-phospho-L-serine + ADP + H(+). It carries out the reaction [HPr protein]-O-phospho-L-serine + phosphate + H(+) = [HPr protein]-L-serine + diphosphate. Catalyzes the ATP- as well as the pyrophosphate-dependent phosphorylation of a specific serine residue in HPr, a phosphocarrier protein of the phosphoenolpyruvate-dependent sugar phosphotransferase system (PTS). HprK/P also catalyzes the pyrophosphate-producing, inorganic phosphate-dependent dephosphorylation (phosphorolysis) of seryl-phosphorylated HPr (P-Ser-HPr). The two antagonistic activities of HprK/P are regulated by several intracellular metabolites, which change their concentration in response to the absence or presence of rapidly metabolisable carbon sources (glucose, fructose, etc.) in the growth medium. Also phosphorylates/dephosphorylates the HPr-like catabolite repression protein crh on a specific serine residue. Therefore, by controlling the phosphorylation state of HPr and crh, HPrK/P is a sensor enzyme that plays a major role in the regulation of carbon metabolism and sugar transport: it mediates carbon catabolite repression (CCR), and regulates PTS-catalyzed carbohydrate uptake and inducer exclusion. In Bacillus cereus (strain B4264), this protein is HPr kinase/phosphorylase.